A 199-amino-acid polypeptide reads, in one-letter code: Regulator of G-protein signaling 16 (199 aa).

Residues Cys-2 and Cys-12 are each lipidated (S-palmitoyl cysteine). Residues 64–180 (SFQSLLNSKN…LKSPAYRDLA (117 aa)) enclose the RGS domain. A phosphotyrosine mark is found at Tyr-167 and Tyr-176.

Interacts with GNAI1 and GNAQ. Interacts with GNAI3, GNAI3 and GNAO1. Palmitoylated on Cys-2 and/or Cys-12. In terms of processing, phosphorylated. Phosphorylation at Tyr-167 by EGFR enhances GTPase accelerating (GAP) activity toward GNAI1. As to expression, predominantly found in the retina. Some expression has been found in the liver.

It localises to the membrane. Regulates G protein-coupled receptor signaling cascades. Inhibits signal transduction by increasing the GTPase activity of G protein alpha subunits, thereby driving them into their inactive GDP-bound form. Plays an important role in the phototransduction cascade by regulating the lifetime and effective concentration of activated transducin alpha. May regulate extra and intracellular mitogenic signals. This is Regulator of G-protein signaling 16 (Rgs16) from Rattus norvegicus (Rat).